An 89-amino-acid chain; its full sequence is Large ribosomal subunit protein bL27 (89 aa).

The tract at residues 1-21 (MAHKKAGGSSRNGRDSKGKRL) is disordered.

This sequence belongs to the bacterial ribosomal protein bL27 family.

The sequence is that of Large ribosomal subunit protein bL27 from Bradyrhizobium sp. (strain ORS 278).